Here is a 387-residue protein sequence, read N- to C-terminus: Phosphoglycerate kinase (387 aa).

Residues 21-23, arginine 36, 59-62, arginine 113, and arginine 146 each bind substrate; these read DLN and HLGR. ATP contacts are provided by residues lysine 197, glutamate 314, and 340–343; that span reads GGDT.

Belongs to the phosphoglycerate kinase family. Monomer.

Its subcellular location is the cytoplasm. It catalyses the reaction (2R)-3-phosphoglycerate + ATP = (2R)-3-phospho-glyceroyl phosphate + ADP. The protein operates within carbohydrate degradation; glycolysis; pyruvate from D-glyceraldehyde 3-phosphate: step 2/5. In Tolumonas auensis (strain DSM 9187 / NBRC 110442 / TA 4), this protein is Phosphoglycerate kinase.